The primary structure comprises 527 residues: Cytochrome P450 monooxyhenase eriA (527 aa).

The chain crosses the membrane as a helical span at residues 17–37 (LGVVDLSLLGVGAVIAFAWLF). N-linked (GlcNAc...) asparagine glycosylation is found at Asn77, Asn274, and Asn297. Cys453 is a heme binding site.

Belongs to the cytochrome P450 family. Requires heme as cofactor.

The protein resides in the membrane. The enzyme catalyses cyathadiol + reduced [NADPH--hemoprotein reductase] + O2 = cyathatriol + oxidized [NADPH--hemoprotein reductase] + H2O + H(+). It functions in the pathway secondary metabolite biosynthesis. In terms of biological role, cytochrome P450 monooxygenase; part of the gene cluster that mediates the biosynthesis of erinacines, cyathane-xylosides that show unique biological activities, including leishmanicidal activity, stimulating activity for nerve growth-factor synthesis, and agonistic activity toward the kappa opioid receptor. Within the pathway, eriA catalyzes C-11 hydroxylation in the presence of the short chain dehydrogenase/reductase (SDR) eriH, which leads to the production of cyathatriol. The first step of the erinacines biosynthesis pathway is catalyzed by the geranylgeranyl diphosphate (GGPP) synthase eriE via conversion of farnesyl pyrophosphate and isopentyl pyrophosphate into geranylgeranyl pyrophosphate (GGPP). GGPP is then substrate of the diterpene cyclase eriG for the production of cyatha-3,12-diene. The cytochrome P450 monooxygenase eriI then hydroxylates cyatha-3,12-diene at C-14 of the seven-membered ring to produce erinacol, which is further hydroxylated at C-15 by the cytochrome P450 monooxygenase eriC to yield cyathadiol. The cytochrome P450 monooxygenase eriA then catalyzes C-11 hydroxylation in the presence of the short chain dehydrogenase/reductase (SDR) eriH, which leads to the production of cyathatriol. The acetyltransferase eriL converts cyathatriol into 11-O-acetyl-cyathatriol. The SDR eriH catalyzes further oxidation of 11-O-acetyl-cyathatriol into 1-O-acetylcyathin A3. Finally, the glycosyl transferase eriJ tranfers xylose from UDP-xylose onto C-14 of 11-O-acetyl-cyathatriol to form eracine Q. EriJ is also able to convert 11-O-acetyl-cyathatriol to eracine Q2 by using UDP-D-glucose as cosubstrate, but at a lower rate. In Hericium erinaceus (Lion's mane mushroom), this protein is Cytochrome P450 monooxyhenase eriA.